Reading from the N-terminus, the 198-residue chain is Holliday junction branch migration complex subunit RuvA (198 aa).

The interval 1-63 (MYDYIKGQLT…EDAQLLFGFH (63 aa)) is domain I. The tract at residues 64-142 (SEEEKDVFLK…EAPKEESSKP (79 aa)) is domain II. The tract at residues 143–147 (PKAKQ) is flexible linker. A domain III region spans residues 148-198 (QGNEQLDEAVEALLALGYKATELKKIRAFFEGTSETAEQYIKSALKMLMKG).

This sequence belongs to the RuvA family. As to quaternary structure, homotetramer. Forms an RuvA(8)-RuvB(12)-Holliday junction (HJ) complex. HJ DNA is sandwiched between 2 RuvA tetramers; dsDNA enters through RuvA and exits via RuvB. An RuvB hexamer assembles on each DNA strand where it exits the tetramer. Each RuvB hexamer is contacted by two RuvA subunits (via domain III) on 2 adjacent RuvB subunits; this complex drives branch migration. In the full resolvosome a probable DNA-RuvA(4)-RuvB(12)-RuvC(2) complex forms which resolves the HJ.

Its subcellular location is the cytoplasm. In terms of biological role, the RuvA-RuvB-RuvC complex processes Holliday junction (HJ) DNA during genetic recombination and DNA repair, while the RuvA-RuvB complex plays an important role in the rescue of blocked DNA replication forks via replication fork reversal (RFR). RuvA specifically binds to HJ cruciform DNA, conferring on it an open structure. The RuvB hexamer acts as an ATP-dependent pump, pulling dsDNA into and through the RuvAB complex. HJ branch migration allows RuvC to scan DNA until it finds its consensus sequence, where it cleaves and resolves the cruciform DNA. This chain is Holliday junction branch migration complex subunit RuvA, found in Streptococcus equi subsp. equi (strain 4047).